The chain runs to 286 residues: Bifunctional protein FolD 2 (286 aa).

Residues 165 to 167 (GRG), threonine 192, and isoleucine 233 contribute to the NADP(+) site.

The protein belongs to the tetrahydrofolate dehydrogenase/cyclohydrolase family. In terms of assembly, homodimer.

It catalyses the reaction (6R)-5,10-methylene-5,6,7,8-tetrahydrofolate + NADP(+) = (6R)-5,10-methenyltetrahydrofolate + NADPH. The enzyme catalyses (6R)-5,10-methenyltetrahydrofolate + H2O = (6R)-10-formyltetrahydrofolate + H(+). It functions in the pathway one-carbon metabolism; tetrahydrofolate interconversion. Catalyzes the oxidation of 5,10-methylenetetrahydrofolate to 5,10-methenyltetrahydrofolate and then the hydrolysis of 5,10-methenyltetrahydrofolate to 10-formyltetrahydrofolate. The protein is Bifunctional protein FolD 2 of Salinispora tropica (strain ATCC BAA-916 / DSM 44818 / JCM 13857 / NBRC 105044 / CNB-440).